A 647-amino-acid chain; its full sequence is 1-deoxy-D-xylulose-5-phosphate synthase (647 aa).

Thiamine diphosphate-binding positions include His79 and 120–122 (GHA). Asp152 contributes to the Mg(2+) binding site. Thiamine diphosphate is bound by residues 153-154 (GS), Asn181, Phe293, and Glu377. Mg(2+) is bound at residue Asn181.

It belongs to the transketolase family. DXPS subfamily. As to quaternary structure, homodimer. Mg(2+) is required as a cofactor. Thiamine diphosphate serves as cofactor.

It catalyses the reaction D-glyceraldehyde 3-phosphate + pyruvate + H(+) = 1-deoxy-D-xylulose 5-phosphate + CO2. It functions in the pathway metabolic intermediate biosynthesis; 1-deoxy-D-xylulose 5-phosphate biosynthesis; 1-deoxy-D-xylulose 5-phosphate from D-glyceraldehyde 3-phosphate and pyruvate: step 1/1. Functionally, catalyzes the acyloin condensation reaction between C atoms 2 and 3 of pyruvate and glyceraldehyde 3-phosphate to yield 1-deoxy-D-xylulose-5-phosphate (DXP). In Bacteroides thetaiotaomicron (strain ATCC 29148 / DSM 2079 / JCM 5827 / CCUG 10774 / NCTC 10582 / VPI-5482 / E50), this protein is 1-deoxy-D-xylulose-5-phosphate synthase.